Reading from the N-terminus, the 377-residue chain is MIEVVDGQRKLSECKRIVVKIGSSLLTANGQGLDLDAISHWAKQIADLHNAGHEIILVSSGAVAEGMVRMKLASRPTDLPSLQACAAIGQMGLIHTWSSVLENHSIRTAQVLLTHDDLADRRRYLNSCDALQNLIDWRVIPVINENDTVSTDEIRFGDNDTLAAMVAGQVHADLLIILTDQQGMFDSDPRHNPDAKLLSTVRAMDDVLFEMAGGGGVLGRGGMVTKVRAARLAAKSGCPTLIASGESDNVLSRVMAGEMLGTLFTTDKDRMTAHQQWLAAHLQTAGRLVIDDGAVEAIKLKHRSLLPVGVKTVEGHFDRGDVVECVDKQGKRVAVGRVNFSSRSAEIIKGLSSDKVYQVLGEARSLEMIHRDHMAIY.

ATP is bound at residue lysine 20. Positions 60, 147, and 159 each coordinate substrate. 179–180 (TD) is an ATP binding site. One can recognise a PUA domain in the interval 285-363 (AGRLVIDDGA…DKVYQVLGEA (79 aa)).

The protein belongs to the glutamate 5-kinase family.

Its subcellular location is the cytoplasm. The catalysed reaction is L-glutamate + ATP = L-glutamyl 5-phosphate + ADP. The protein operates within amino-acid biosynthesis; L-proline biosynthesis; L-glutamate 5-semialdehyde from L-glutamate: step 1/2. Its function is as follows. Catalyzes the transfer of a phosphate group to glutamate to form L-glutamate 5-phosphate. The polypeptide is Glutamate 5-kinase (Acinetobacter baumannii (strain AB307-0294)).